Consider the following 169-residue polypeptide: Der GTPase-activating protein YihI (169 aa).

Disordered stretches follow at residues 1 to 100 (MKPS…AELE) and 144 to 169 (GLSYDDDEEEEEDEKQEDMMRLLRGN). The segment covering 10–19 (SKGHAKARRK) has biased composition (basic residues). Residues 20–30 (TREELDQEARD) show a composition bias toward basic and acidic residues. Residues 31 to 40 (RKRQKKRRGH) are compositionally biased toward basic residues. Residues 49–58 (GNTTSGSKGQ) show a composition bias toward polar residues. The segment covering 147-159 (YDDDEEEEEDEKQ) has biased composition (acidic residues). The segment covering 160–169 (EDMMRLLRGN) has biased composition (basic and acidic residues).

The protein belongs to the YihI family. Interacts with Der.

A GTPase-activating protein (GAP) that modifies Der/EngA GTPase function. May play a role in ribosome biogenesis. The sequence is that of Der GTPase-activating protein YihI from Escherichia coli O6:H1 (strain CFT073 / ATCC 700928 / UPEC).